A 478-amino-acid chain; its full sequence is Glutamate--tRNA ligase (478 aa).

The 'HIGH' region motif lies at 8 to 18 (PSPTGYLHLGN). The short motif at 248-252 (KLSKR) is the 'KMSKS' region element. An ATP-binding site is contributed by Lys251.

This sequence belongs to the class-I aminoacyl-tRNA synthetase family. Glutamate--tRNA ligase type 1 subfamily. Monomer.

The protein localises to the cytoplasm. It catalyses the reaction tRNA(Glu) + L-glutamate + ATP = L-glutamyl-tRNA(Glu) + AMP + diphosphate. Its function is as follows. Catalyzes the attachment of glutamate to tRNA(Glu) in a two-step reaction: glutamate is first activated by ATP to form Glu-AMP and then transferred to the acceptor end of tRNA(Glu). The polypeptide is Glutamate--tRNA ligase (Sulfurihydrogenibium sp. (strain YO3AOP1)).